The primary structure comprises 314 residues: Formimidoylglutamase (314 aa).

Residues His127, Asp151, His153, Asp155, Asp239, and Asp241 each coordinate Mn(2+).

It belongs to the arginase family. Mn(2+) serves as cofactor.

The catalysed reaction is N-formimidoyl-L-glutamate + H2O = formamide + L-glutamate. The protein operates within amino-acid degradation; L-histidine degradation into L-glutamate; L-glutamate from N-formimidoyl-L-glutamate (hydrolase route): step 1/1. Functionally, catalyzes the conversion of N-formimidoyl-L-glutamate to L-glutamate and formamide. The chain is Formimidoylglutamase from Corynebacterium efficiens (strain DSM 44549 / YS-314 / AJ 12310 / JCM 11189 / NBRC 100395).